A 393-amino-acid chain; its full sequence is Formate-dependent phosphoribosylglycinamide formyltransferase (393 aa).

Residues 22 to 23 (EL) and glutamate 82 each bind N(1)-(5-phospho-beta-D-ribosyl)glycinamide. ATP is bound by residues arginine 114, lysine 155, 160–165 (SSGKGQ), 195–198 (EGFV), and glutamate 203. In terms of domain architecture, ATP-grasp spans 119–308 (RLAAEDLGIP…EFALHLRAIL (190 aa)). Mg(2+) is bound by residues glutamate 267 and glutamate 279. N(1)-(5-phospho-beta-D-ribosyl)glycinamide-binding positions include aspartate 286, lysine 356, and 363-364 (RR).

This sequence belongs to the PurK/PurT family. In terms of assembly, homodimer.

The enzyme catalyses N(1)-(5-phospho-beta-D-ribosyl)glycinamide + formate + ATP = N(2)-formyl-N(1)-(5-phospho-beta-D-ribosyl)glycinamide + ADP + phosphate + H(+). It functions in the pathway purine metabolism; IMP biosynthesis via de novo pathway; N(2)-formyl-N(1)-(5-phospho-D-ribosyl)glycinamide from N(1)-(5-phospho-D-ribosyl)glycinamide (formate route): step 1/1. In terms of biological role, involved in the de novo purine biosynthesis. Catalyzes the transfer of formate to 5-phospho-ribosyl-glycinamide (GAR), producing 5-phospho-ribosyl-N-formylglycinamide (FGAR). Formate is provided by PurU via hydrolysis of 10-formyl-tetrahydrofolate. The protein is Formate-dependent phosphoribosylglycinamide formyltransferase of Hydrogenovibrio crunogenus (strain DSM 25203 / XCL-2) (Thiomicrospira crunogena).